The following is a 503-amino-acid chain: NAD-dependent protein deacetylase HST1 (503 aa).

The Deacetylase sirtuin-type domain occupies 183-468 (RLPNFNTIDH…SLVAKKCHWD (286 aa)). Residues 208–227 (GAGV…EGFY) and 290–293 (QNID) contribute to the NAD(+) site. H310 acts as the Proton acceptor in catalysis. Zn(2+) is bound by residues C318, C321, C342, and C345. NAD(+) contacts are provided by residues 412–414 (GTS), 437–439 (NRD), and C454.

This sequence belongs to the sirtuin family. Class I subfamily. Identified in the Set3C complex with HOS2, SIF2, SNT1, CPR1, HOS4/YIL112W and SET3. Its presence is however not essential for meiotic repression by the Set3C complex. Interacts with SUM1 and RFM1. The interaction with SUM1 is mediated by RFM1. Zn(2+) is required as a cofactor.

Its subcellular location is the nucleus. It catalyses the reaction N(6)-acetyl-L-lysyl-[protein] + NAD(+) + H2O = 2''-O-acetyl-ADP-D-ribose + nicotinamide + L-lysyl-[protein]. NAD-dependent histone deacetylase involved in telomeric silencing. Histone deacetylase proteins act via the formation of large multiprotein complexes that are responsible for the deacetylation of lysine residues on the N-terminal part of the core histones (H2A, H2B, H3 and H4). Histone deacetylation gives a tag for epigenetic repression and plays an important role in transcriptional regulation, cell cycle progression and developmental events. Restores silencing at HMR in SIR2 mutants when overexpressed. Required to repress middle sporulation genes during vegetative growth. Acts as a sensor of NAD(+) levels and regulator of NAD(+) biosynthesis. Regulates the gene expression of de novo NAD(+) biosynthesis genes. This Saccharomyces cerevisiae (strain ATCC 204508 / S288c) (Baker's yeast) protein is NAD-dependent protein deacetylase HST1 (HST1).